The sequence spans 510 residues: Bifunctional purine biosynthesis protein PurH (510 aa).

The MGS-like domain occupies 1-142 (MRALLSVSDK…KNYKDVMVLC (142 aa)).

Belongs to the PurH family.

The enzyme catalyses (6R)-10-formyltetrahydrofolate + 5-amino-1-(5-phospho-beta-D-ribosyl)imidazole-4-carboxamide = 5-formamido-1-(5-phospho-D-ribosyl)imidazole-4-carboxamide + (6S)-5,6,7,8-tetrahydrofolate. It carries out the reaction IMP + H2O = 5-formamido-1-(5-phospho-D-ribosyl)imidazole-4-carboxamide. It functions in the pathway purine metabolism; IMP biosynthesis via de novo pathway; 5-formamido-1-(5-phospho-D-ribosyl)imidazole-4-carboxamide from 5-amino-1-(5-phospho-D-ribosyl)imidazole-4-carboxamide (10-formyl THF route): step 1/1. Its pathway is purine metabolism; IMP biosynthesis via de novo pathway; IMP from 5-formamido-1-(5-phospho-D-ribosyl)imidazole-4-carboxamide: step 1/1. The polypeptide is Bifunctional purine biosynthesis protein PurH (Campylobacter jejuni (strain RM1221)).